The chain runs to 180 residues: Adenine phosphoribosyltransferase (180 aa).

Ala2 is modified (N-acetylalanine). Residues Ser15 and Ser30 each carry the phosphoserine modification. At Tyr60 the chain carries Phosphotyrosine. Ser66 bears the Phosphoserine mark. At Lys114 the chain carries N6-acetyllysine. Position 135 is a phosphothreonine (Thr135).

It belongs to the purine/pyrimidine phosphoribosyltransferase family. As to quaternary structure, homodimer.

It localises to the cytoplasm. The enzyme catalyses AMP + diphosphate = 5-phospho-alpha-D-ribose 1-diphosphate + adenine. The protein operates within purine metabolism; AMP biosynthesis via salvage pathway; AMP from adenine: step 1/1. Its function is as follows. Catalyzes a salvage reaction resulting in the formation of AMP, that is energically less costly than de novo synthesis. This Dipodillus campestris (North African gerbil) protein is Adenine phosphoribosyltransferase.